Reading from the N-terminus, the 602-residue chain is Elongation factor 4 (602 aa).

In terms of domain architecture, tr-type G spans Lys8–Ser189. Residues Asp20–Thr25 and Asn136–Asp139 each bind GTP.

Belongs to the TRAFAC class translation factor GTPase superfamily. Classic translation factor GTPase family. LepA subfamily.

The protein resides in the cell inner membrane. The enzyme catalyses GTP + H2O = GDP + phosphate + H(+). Its function is as follows. Required for accurate and efficient protein synthesis under certain stress conditions. May act as a fidelity factor of the translation reaction, by catalyzing a one-codon backward translocation of tRNAs on improperly translocated ribosomes. Back-translocation proceeds from a post-translocation (POST) complex to a pre-translocation (PRE) complex, thus giving elongation factor G a second chance to translocate the tRNAs correctly. Binds to ribosomes in a GTP-dependent manner. This Helicobacter pylori (strain HPAG1) protein is Elongation factor 4.